The primary structure comprises 488 residues: 3-octaprenyl-4-hydroxybenzoate carboxy-lyase (488 aa).

Residue Asn-172 participates in Mn(2+) binding. Prenylated FMN contacts are provided by residues 175–177, 189–191, and 194–195; these read IYR, RWL, and RG. Glu-238 is a Mn(2+) binding site. Asp-287 functions as the Proton donor in the catalytic mechanism.

The protein belongs to the UbiD family. Homohexamer. The cofactor is prenylated FMN. It depends on Mn(2+) as a cofactor.

The protein localises to the cell membrane. The catalysed reaction is a 4-hydroxy-3-(all-trans-polyprenyl)benzoate + H(+) = a 2-(all-trans-polyprenyl)phenol + CO2. The protein operates within cofactor biosynthesis; ubiquinone biosynthesis. In terms of biological role, catalyzes the decarboxylation of 3-octaprenyl-4-hydroxy benzoate to 2-octaprenylphenol, an intermediate step in ubiquinone biosynthesis. In Pseudomonas putida (strain W619), this protein is 3-octaprenyl-4-hydroxybenzoate carboxy-lyase.